The primary structure comprises 536 residues: Lysosomal acid glucosylceramidase (536 aa).

A signal peptide spans 1-39; that stretch reads MEFSSPSREECPKPSGRVNIMAGSLTGLLLLQAVSWASG. 2 disulfides stabilise this stretch: Cys-43/Cys-55 and Cys-57/Cys-62. N-linked (GlcNAc...) asparagine glycans are attached at residues Asn-58, Asn-98, and Asn-185. The active-site Proton donor is the Glu-274. Asn-309 carries N-linked (GlcNAc...) asparagine glycosylation. Glu-379 acts as the Nucleophile in catalysis. A glycan (N-linked (GlcNAc...) asparagine) is linked at Asn-501.

It belongs to the glycosyl hydrolase 30 family. In terms of assembly, interacts with saposin-C. Interacts with SCARB2. Interacts with TCP1. Interacts with GRN; this interaction prevents aggregation of GBA1-SCARB2 complex via interaction with HSPA1A upon stress.

Its subcellular location is the lysosome membrane. It carries out the reaction a beta-D-glucosyl-(1&lt;-&gt;1')-N-acylsphing-4-enine + H2O = an N-acylsphing-4-enine + D-glucose. The enzyme catalyses a beta-D-galactosyl-(1&lt;-&gt;1')-N-acylsphing-4-enine + H2O = an N-acylsphing-4-enine + D-galactose. The catalysed reaction is cholesteryl 3-beta-D-glucoside + H2O = cholesterol + D-glucose. It catalyses the reaction a beta-D-glucosyl-(1&lt;-&gt;1')-N-acylsphing-4-enine + cholesterol = cholesteryl 3-beta-D-glucoside + an N-acylsphing-4-enine. It carries out the reaction beta-D-glucosyl-N-(9Z-octadecenoyl)-sphing-4E-enine + cholesterol = N-(9Z-octadecenoyl)-sphing-4-enine + cholesteryl 3-beta-D-glucoside. The enzyme catalyses beta-D-glucosyl-N-octanoylsphing-4E-enine + cholesterol = N-octanoylsphing-4-enine + cholesteryl 3-beta-D-glucoside. The catalysed reaction is beta-D-glucosyl-N-dodecanoylsphing-4-enine + cholesterol = N-dodecanoylsphing-4-enine + cholesteryl 3-beta-D-glucoside. It catalyses the reaction beta-D-glucosyl-(1&lt;-&gt;1)-N-octadecanoylsphing-4-enine + cholesterol = N-octadecanoylsphing-4-enine + cholesteryl 3-beta-D-glucoside. It carries out the reaction beta-D-glucosyl-(1&lt;-&gt;1')-N-(15Z-tetracosenoyl)-sphing-4-enine + cholesterol = N-(15Z-tetracosenoyl)-sphing-4-enine + cholesteryl 3-beta-D-glucoside. The enzyme catalyses a beta-D-galactosyl-(1&lt;-&gt;1')-N-acylsphing-4-enine + cholesterol = cholesteryl 3-beta-D-galactoside + an N-acylsphing-4-enine. The catalysed reaction is 1-(beta-D-galactosyl)-N-dodecanoylsphing-4-enine + cholesterol = cholesteryl 3-beta-D-galactoside + N-dodecanoylsphing-4-enine. It catalyses the reaction a beta-D-xylosyl-(1&lt;-&gt;1')-N-acylsphing-4-enine + cholesterol = cholesteryl 3-beta-D-xyloside + an N-acylsphing-4-enine. It carries out the reaction beta-D-xylosyl-(1&lt;-&gt;1')-N-(9Z-octadecenoyl)-sphing-4-enine + cholesterol = cholesteryl 3-beta-D-xyloside + N-(9Z-octadecenoyl)-sphing-4-enine. The protein operates within steroid metabolism; cholesterol metabolism. Its pathway is sphingolipid metabolism. Its function is as follows. Glucosylceramidase that catalyzes, within the lysosomal compartment, the hydrolysis of glucosylceramides/GlcCers (such as beta-D-glucosyl-(1&lt;-&gt;1')-N-acylsphing-4-enine) into free ceramides (such as N-acylsphing-4-enine) and glucose. Plays a central role in the degradation of complex lipids and the turnover of cellular membranes. Through the production of ceramides, participates in the PKC-activated salvage pathway of ceramide formation. Catalyzes the glucosylation of cholesterol, through a transglucosylation reaction where glucose is transferred from GlcCer to cholesterol. GlcCer containing mono-unsaturated fatty acids (such as beta-D-glucosyl-N-(9Z-octadecenoyl)-sphing-4-enine) are preferred as glucose donors for cholesterol glucosylation when compared with GlcCer containing same chain length of saturated fatty acids (such as beta-D-glucosyl-N-octadecanoyl-sphing-4-enine). Under specific conditions, may alternatively catalyze the reverse reaction, transferring glucose from cholesteryl 3-beta-D-glucoside to ceramide. Can also hydrolyze cholesteryl 3-beta-D-glucoside producing glucose and cholesterol. Catalyzes the hydrolysis of galactosylceramides/GalCers (such as beta-D-galactosyl-(1&lt;-&gt;1')-N-acylsphing-4-enine), as well as the transfer of galactose between GalCers and cholesterol in vitro, but with lower activity than with GlcCers. Contrary to GlcCer and GalCer, xylosylceramide/XylCer (such as beta-D-xyosyl-(1&lt;-&gt;1')-N-acylsphing-4-enine) is not a good substrate for hydrolysis, however it is a good xylose donor for transxylosylation activity to form cholesteryl 3-beta-D-xyloside. The sequence is that of Lysosomal acid glucosylceramidase (GBA1) from Pongo abelii (Sumatran orangutan).